Consider the following 135-residue polypeptide: 30 kDa antigenic glycoprotein (135 aa).

An N-terminal signal peptide occupies residues 1–5 (GNTYS). N-linked (GlcNAc...) asparagine glycans are attached at residues asparagine 22, asparagine 31, asparagine 57, and asparagine 73.

This sequence to H.contortus 15 kDa excretory/secretory protein.

The protein resides in the secreted. This is 30 kDa antigenic glycoprotein from Trichostrongylus colubriformis (Black scour worm).